The primary structure comprises 638 residues: Zona pellucida sperm-binding protein 1 (638 aa).

The first 25 residues, 1–25, serve as a signal peptide directing secretion; it reads MAGGSATTWGYPVALLLLVATLGLG. Topologically, residues 26 to 601 are extracellular; the sequence is RWLQPDPGLP…DSNGNSSLRP (576 aa). A glycan (N-linked (GlcNAc...) asparagine) is linked at Asn76. Positions 165 to 175 are enriched in polar residues; that stretch reads LPTSGHTSQGS. The disordered stretch occupies residues 165 to 208; the sequence is LPTSGHTSQGSGHAFPSPLDPGHSSVHPTPALPSPGPGPTLATL. The region spanning 234–274 is the P-type domain; that stretch reads EQCQVASGHLPCIVRRTSKEACQQAGCCYDNTREVPCYYGN. 3 disulfide bridges follow: Cys236–Cys261, Cys245–Cys260, and Cys255–Cys270. The region spanning 279–553 is the ZP domain; it reads QCFRDGYFVL…TACSTGTTRQ (275 aa). The N-linked (GlcNAc...) asparagine glycan is linked to Asn379. A disulfide bond links Cys457 and Cys478. A disordered region spans residues 549-594; that stretch reads GTTRQRRSSGHRNDTARPQDIVSSPGPVGFEDSYGQEPTLGPTDSN. The propeptide at 554–638 is removed in mature form; sequence RRSSGHRNDT…AQKLWESNRQ (85 aa). N-linked (GlcNAc...) asparagine glycosylation is found at Asn561 and Asn596. A helical membrane pass occupies residues 602 to 622; that stretch reads LLWAVLLLPAVALVLGFGVFV. Over 623 to 638 the chain is Cytoplasmic; sequence GLSQTWAQKLWESNRQ.

This sequence belongs to the ZP domain family. ZPB subfamily. As to quaternary structure, polymers of ZP2 and ZP3 organized into long filaments cross-linked by ZP1 homodimers. Interacts with ZP3. Post-translationally, proteolytically cleaved before the transmembrane segment to yield the secreted ectodomain incorporated in the zona pellucida. O-glycosylated. Expressed in oocytes (at protein level).

The protein resides in the zona pellucida. It is found in the cell membrane. Component of the zona pellucida, an extracellular matrix surrounding oocytes which mediates sperm binding, induction of the acrosome reaction and prevents post-fertilization polyspermy. The zona pellucida is composed of 3 to 4 glycoproteins, ZP1, ZP2, ZP3, and ZP4. ZP1 ensures the structural integrity of the zona pellucida. This is Zona pellucida sperm-binding protein 1 (ZP1) from Homo sapiens (Human).